A 226-amino-acid chain; its full sequence is Phosphoribosylformylglycinamidine synthase subunit PurQ (226 aa).

The Glutamine amidotransferase type-1 domain maps to 4–226 (RIGVVTFPGS…TSILKKLVNA (223 aa)). Cys87 serves as the catalytic Nucleophile. Active-site residues include His196 and Glu198.

As to quaternary structure, part of the FGAM synthase complex composed of 1 PurL, 1 PurQ and 2 PurS subunits.

It is found in the cytoplasm. It carries out the reaction N(2)-formyl-N(1)-(5-phospho-beta-D-ribosyl)glycinamide + L-glutamine + ATP + H2O = 2-formamido-N(1)-(5-O-phospho-beta-D-ribosyl)acetamidine + L-glutamate + ADP + phosphate + H(+). The catalysed reaction is L-glutamine + H2O = L-glutamate + NH4(+). It functions in the pathway purine metabolism; IMP biosynthesis via de novo pathway; 5-amino-1-(5-phospho-D-ribosyl)imidazole from N(2)-formyl-N(1)-(5-phospho-D-ribosyl)glycinamide: step 1/2. Functionally, part of the phosphoribosylformylglycinamidine synthase complex involved in the purines biosynthetic pathway. Catalyzes the ATP-dependent conversion of formylglycinamide ribonucleotide (FGAR) and glutamine to yield formylglycinamidine ribonucleotide (FGAM) and glutamate. The FGAM synthase complex is composed of three subunits. PurQ produces an ammonia molecule by converting glutamine to glutamate. PurL transfers the ammonia molecule to FGAR to form FGAM in an ATP-dependent manner. PurS interacts with PurQ and PurL and is thought to assist in the transfer of the ammonia molecule from PurQ to PurL. This chain is Phosphoribosylformylglycinamidine synthase subunit PurQ, found in Streptomyces coelicolor (strain ATCC BAA-471 / A3(2) / M145).